We begin with the raw amino-acid sequence, 487 residues long: F-box/LRR-repeat protein At1g48400 (487 aa).

Residues Arg-9–Ser-57 enclose the F-box domain. LRR repeat units lie at residues Ser-71–Arg-97, His-125–Ala-153, Ser-174–Asp-199, Thr-225–Ser-251, Thr-327–Ser-358, and Asn-359–Gly-384.

In Arabidopsis thaliana (Mouse-ear cress), this protein is F-box/LRR-repeat protein At1g48400.